Here is a 1403-residue protein sequence, read N- to C-terminus: DNA-directed RNA polymerase subunit beta' (1403 aa).

Zn(2+)-binding residues include cysteine 69, cysteine 71, cysteine 84, and cysteine 87. Mg(2+)-binding residues include aspartate 461, aspartate 463, and aspartate 465. 4 residues coordinate Zn(2+): cysteine 818, cysteine 891, cysteine 898, and cysteine 901. The tract at residues 1384-1403 (LELLRNEGEDETGNEELVAE) is disordered. The span at 1391-1403 (GEDETGNEELVAE) shows a compositional bias: acidic residues.

Belongs to the RNA polymerase beta' chain family. In terms of assembly, the RNAP catalytic core consists of 2 alpha, 1 beta, 1 beta' and 1 omega subunit. When a sigma factor is associated with the core the holoenzyme is formed, which can initiate transcription. The cofactor is Mg(2+). Zn(2+) is required as a cofactor.

It catalyses the reaction RNA(n) + a ribonucleoside 5'-triphosphate = RNA(n+1) + diphosphate. In terms of biological role, DNA-dependent RNA polymerase catalyzes the transcription of DNA into RNA using the four ribonucleoside triphosphates as substrates. In Koribacter versatilis (strain Ellin345), this protein is DNA-directed RNA polymerase subunit beta'.